The chain runs to 254 residues: Aspartate/glutamate leucyltransferase (254 aa).

The protein belongs to the R-transferase family. Bpt subfamily.

Its subcellular location is the cytoplasm. The enzyme catalyses N-terminal L-glutamyl-[protein] + L-leucyl-tRNA(Leu) = N-terminal L-leucyl-L-glutamyl-[protein] + tRNA(Leu) + H(+). It carries out the reaction N-terminal L-aspartyl-[protein] + L-leucyl-tRNA(Leu) = N-terminal L-leucyl-L-aspartyl-[protein] + tRNA(Leu) + H(+). Functionally, functions in the N-end rule pathway of protein degradation where it conjugates Leu from its aminoacyl-tRNA to the N-termini of proteins containing an N-terminal aspartate or glutamate. This Xylella fastidiosa (strain M23) protein is Aspartate/glutamate leucyltransferase.